A 503-amino-acid chain; its full sequence is LEM domain-containing protein 2 (503 aa).

N-acetylalanine is present on Ala-2. Residues 2 to 42 (AGLSDLELRRELQALGFQPGPITDTTRDVYRNKLRRLRGEA) enclose the LEM domain. A compositionally biased stretch (basic and acidic residues) spans 42 to 74 (ARLRDEERLREEARPRGEERLREEARLREDAPL). Disordered stretches follow at residues 42 to 97 (ARLR…SGSA) and 127 to 157 (AQLR…GPGL). Residues 74–130 (LRARPAAASPRAEPWLSQPASGSAYATPGAYGDIRPSAASWVGSRGLAYPARPAQLR) form a required for nuclear retention and interaction with LMNA isoform C region. A compositionally biased stretch (low complexity) spans 75–87 (RARPAAASPRAEP). 2 positions are modified to phosphoserine: Ser-166 and Ser-175. The tract at residues 172–198 (LPSSLLGPDPRPGLRATRAGPAGAARA) is disordered. Positions 184 to 197 (GLRATRAGPAGAAR) are enriched in low complexity. 2 helical membrane-spanning segments follow: residues 213 to 233 (LLLW…WVKM) and 377 to 397 (VTNV…LILL). Positions 395–503 (ILLKYRWRKL…KPSSFSDSER (109 aa)) are winged-Helix (WH). Residues Ser-497, Ser-499, and Ser-501 each carry the phosphoserine modification.

As to quaternary structure, interacts (via N-terminus) with LMNA isoform C (via C-terminus) (in vitro). Interacts (via LEM domain) with BANF1. Interacts (via C-terminus) with CHMP7. Interacts (via N-terminus) with tubulin; the interaction causes microtubule bundling and stabilization (in vitro). Phosphorylated; strongly phosphorylated in mitosis compared to G1/S. Ubiquitously expressed, including bone marrow, brain, kidney, colon, skeletal muscle, thymus, testis and uterus.

It localises to the nucleus inner membrane. Its subcellular location is the nucleus envelope. It is found in the cytoplasm. The protein resides in the cytoskeleton. The protein localises to the spindle. In terms of biological role, nuclear lamina-associated inner nuclear membrane protein that is involved in nuclear structure organization, maintenance of nuclear envelope (NE) integrity and NE reformation after mitosis. Plays a role as transmembrane adapter for the endosomal sorting complexes required for transport (ESCRT), and is thereby involved in ESCRT-mediated NE reformation. Promotes ESCRT-mediated NE closure by recruiting CHMP7 and downstream ESCRT-III proteins IST1/CHMP8 and CHMP2A to the reforming NE during anaphase. During nuclear reassembly, condenses into a liquid-like coating around microtubule spindles and coassembles with CHMP7 to form a macromolecular O-ring seal at the confluence between membranes, chromatin, and the spindle to facilitate early nuclear sealing. Plays a role in the organization of heterochromatin associated with the NE and in the maintenance of NE organization under mechanical stress. Required for embryonic development and involved in regulation of several signaling pathways such as MAPK and AKT. Required for myoblast differentiation involving regulation of ERK signaling. Essential for cardiac homeostasis and proper heart function. This is LEM domain-containing protein 2 (LEMD2) from Homo sapiens (Human).